The following is a 519-amino-acid chain: NAD-dependent histone deacetylase SIR2 (519 aa).

Positions 154-212 are disordered; sequence EIDENDNKNDGTNNSDIDSDIDSNSDMDSQSESGELDDAMDVDDSLSENEDEYDQDMST. The segment covering 187-208 has biased composition (acidic residues); it reads GELDDAMDVDDSLSENEDEYDQ. The Deacetylase sirtuin-type domain occupies 221–486; it reads MTPFKYKLPD…SYLCKCLKWD (266 aa). Residues 246–265 and 328–331 each bind NAD(+); these read GAGI…KGLY and QNID. The Proton acceptor role is filled by His348. Residues Cys356, Cys359, Cys380, and Cys383 each contribute to the Zn(2+) site. Residues 430 to 432, 455 to 457, and Cys472 contribute to the NAD(+) site; these read GTS and NKD.

It belongs to the sirtuin family. Class I subfamily. Interacts with HXK1. Requires Zn(2+) as cofactor.

The protein resides in the nucleus. It carries out the reaction N(6)-acetyl-L-lysyl-[protein] + NAD(+) + H2O = 2''-O-acetyl-ADP-D-ribose + nicotinamide + L-lysyl-[protein]. NAD-dependent deacetylase. Heterochromatin component that silences transcription at silent mating loci, telomeres and the ribosomal DNA, and that also suppresses recombination in the rDNA and extends replicative life span. It acts as a NAD-dependent histone deacetylase, which deacetylates 'Lys-9' and 'Lys-14' of Histone H3 and 'Lys-16' of Histone H4. Functions in the distribution of oxidatively damaged proteins during cell division. Mediates phenotypic switching. The protein is NAD-dependent histone deacetylase SIR2 of Candida albicans (strain SC5314 / ATCC MYA-2876) (Yeast).